Consider the following 96-residue polypeptide: Large ribosomal subunit protein bL28 (96 aa).

The tract at residues 1–23 is disordered; that stretch reads MSRVCELSGKAPMTGNTVSHANN.

It belongs to the bacterial ribosomal protein bL28 family.

This chain is Large ribosomal subunit protein bL28, found in Cereibacter sphaeroides (strain ATCC 17029 / ATH 2.4.9) (Rhodobacter sphaeroides).